A 340-amino-acid polypeptide reads, in one-letter code: UDP-N-acetylglucosamine--N-acetylmuramyl-(pentapeptide) pyrophosphoryl-undecaprenol N-acetylglucosamine transferase (340 aa).

Residues 10–12, asparagine 110, serine 171, and glutamine 272 contribute to the UDP-N-acetyl-alpha-D-glucosamine site; that span reads TGG.

This sequence belongs to the glycosyltransferase 28 family. MurG subfamily.

The protein resides in the cell membrane. The catalysed reaction is di-trans,octa-cis-undecaprenyl diphospho-N-acetyl-alpha-D-muramoyl-L-alanyl-D-glutamyl-meso-2,6-diaminopimeloyl-D-alanyl-D-alanine + UDP-N-acetyl-alpha-D-glucosamine = di-trans,octa-cis-undecaprenyl diphospho-[N-acetyl-alpha-D-glucosaminyl-(1-&gt;4)]-N-acetyl-alpha-D-muramoyl-L-alanyl-D-glutamyl-meso-2,6-diaminopimeloyl-D-alanyl-D-alanine + UDP + H(+). Its pathway is cell wall biogenesis; peptidoglycan biosynthesis. Functionally, cell wall formation. Catalyzes the transfer of a GlcNAc subunit on undecaprenyl-pyrophosphoryl-MurNAc-pentapeptide (lipid intermediate I) to form undecaprenyl-pyrophosphoryl-MurNAc-(pentapeptide)GlcNAc (lipid intermediate II). This Wolbachia pipientis subsp. Culex pipiens (strain wPip) protein is UDP-N-acetylglucosamine--N-acetylmuramyl-(pentapeptide) pyrophosphoryl-undecaprenol N-acetylglucosamine transferase.